The following is a 268-amino-acid chain: UPF0719 transmembrane protein aq_1349 (268 aa).

The next 8 helical transmembrane spans lie at 5 to 24 (LIAL…LFFR), 37 to 59 (NLAL…YSVY), 69 to 91 (LYLI…IFLR), 104 to 126 (AGAG…ASFW), 130 to 152 (SFIL…LFIS), 173 to 195 (FSAS…GAIS), 210 to 232 (VLYF…FLLF), and 245 to 267 (NLSA…LAVM).

It belongs to the UPF0719 family.

The protein resides in the cell membrane. This is UPF0719 transmembrane protein aq_1349 from Aquifex aeolicus (strain VF5).